Consider the following 408-residue polypeptide: Peptidase T (408 aa).

A Zn(2+)-binding site is contributed by His78. Asp80 is an active-site residue. Asp140 is a binding site for Zn(2+). Glu173 serves as the catalytic Proton acceptor. Zn(2+) is bound by residues Glu174, Asp196, and His379.

This sequence belongs to the peptidase M20B family. Zn(2+) serves as cofactor.

The protein localises to the cytoplasm. The enzyme catalyses Release of the N-terminal residue from a tripeptide.. Cleaves the N-terminal amino acid of tripeptides. The protein is Peptidase T of Escherichia fergusonii (strain ATCC 35469 / DSM 13698 / CCUG 18766 / IAM 14443 / JCM 21226 / LMG 7866 / NBRC 102419 / NCTC 12128 / CDC 0568-73).